We begin with the raw amino-acid sequence, 160 residues long: MAFKRKVLGKTDYGRRLRLLKSKDRRFIVRITNKGIIAQIAEYSVNGDRILATITDKALSKYGIELRGNNLQICYLVGYAAGVEAQKAGVETAVLDIGRKKFRKGGRIAACLKGITDSGVDIPHGEDVFPDKKRLNGSHLKNPVKLNEAVKNFKKLEEKA.

The protein belongs to the universal ribosomal protein uL18 family. As to quaternary structure, part of the 50S ribosomal subunit. Contacts the 5S and 23S rRNAs.

Its function is as follows. This is one of the proteins that bind and probably mediate the attachment of the 5S RNA into the large ribosomal subunit, where it forms part of the central protuberance. This is Large ribosomal subunit protein uL18 from Thermoplasma volcanium (strain ATCC 51530 / DSM 4299 / JCM 9571 / NBRC 15438 / GSS1).